An 879-amino-acid chain; its full sequence is uncharacterized protein (879 aa).

A helical transmembrane segment spans residues 14–34; sequence LAFFGCGVSVGAFFTLFLMGT.

It is found in the membrane. This is an uncharacterized protein from Mycoplasma pneumoniae (strain ATCC 29342 / M129 / Subtype 1) (Mycoplasmoides pneumoniae).